A 321-amino-acid polypeptide reads, in one-letter code: Urease accessory protein UreD (321 aa).

This sequence belongs to the UreD family. In terms of assembly, ureD, UreF and UreG form a complex that acts as a GTP-hydrolysis-dependent molecular chaperone, activating the urease apoprotein by helping to assemble the nickel containing metallocenter of UreC. The UreE protein probably delivers the nickel.

It is found in the cytoplasm. In terms of biological role, required for maturation of urease via the functional incorporation of the urease nickel metallocenter. The chain is Urease accessory protein UreD from Yersinia pseudotuberculosis serotype O:1b (strain IP 31758).